We begin with the raw amino-acid sequence, 882 residues long: Alanine--tRNA ligase (882 aa).

Histidine 570, histidine 574, cysteine 672, and histidine 676 together coordinate Zn(2+).

It belongs to the class-II aminoacyl-tRNA synthetase family. The cofactor is Zn(2+).

It is found in the cytoplasm. It catalyses the reaction tRNA(Ala) + L-alanine + ATP = L-alanyl-tRNA(Ala) + AMP + diphosphate. Its function is as follows. Catalyzes the attachment of alanine to tRNA(Ala) in a two-step reaction: alanine is first activated by ATP to form Ala-AMP and then transferred to the acceptor end of tRNA(Ala). Also edits incorrectly charged Ser-tRNA(Ala) and Gly-tRNA(Ala) via its editing domain. In Xanthomonas campestris pv. campestris (strain B100), this protein is Alanine--tRNA ligase.